A 243-amino-acid chain; its full sequence is Tyrosine recombinase XerD-like (243 aa).

The 72-residue stretch at methionine 1 to tyrosine 72 folds into the Core-binding (CB) domain. One can recognise a Tyr recombinase domain in the interval leucine 85–arginine 243. Active-site residues include lysine 149 and arginine 210. Catalysis depends on tyrosine 242, which acts as the O-(3'-phospho-DNA)-tyrosine intermediate.

The protein belongs to the 'phage' integrase family. XerD-like subfamily.

Its subcellular location is the cytoplasm. Putative tyrosine recombinase. Not involved in the cutting and rejoining of the recombining DNA molecules on dif(SL) site. This chain is Tyrosine recombinase XerD-like, found in Streptococcus sanguinis (strain SK36).